Reading from the N-terminus, the 77-residue chain is MSEVISIRVRRGLKKELEELGINYAEAVRKFLEELVARERRRRALERARALREELRKKGAFPPSAELIREDRDEASR.

The stretch at 10 to 60 (RRGLKKELEELGINYAEAVRKFLEELVARERRRRALERARALREELRKKGA) forms a coiled coil.

As to quaternary structure, forms a complex with putative toxin VapC3, possibly VapB(2)-VapC(2).

In terms of biological role, antitoxin component of a type II toxin-antitoxin (TA) system. In Pyrobaculum aerophilum (strain ATCC 51768 / DSM 7523 / JCM 9630 / CIP 104966 / NBRC 100827 / IM2), this protein is Putative antitoxin VapB3 (vAPb3).